A 45-amino-acid chain; its full sequence is Defensin Tk-AMP-D4 (45 aa).

Intrachain disulfides connect Cys3/Cys45, Cys14/Cys34, Cys20/Cys39, and Cys24/Cys41.

In terms of biological role, plant defense peptide. The protein is Defensin Tk-AMP-D4 of Triticum kiharae (Wheat).